The chain runs to 271 residues: DNA repair protein RecO (271 aa).

This sequence belongs to the RecO family.

Its function is as follows. Involved in DNA repair and RecF pathway recombination. This Rhodococcus erythropolis (strain PR4 / NBRC 100887) protein is DNA repair protein RecO.